The following is a 670-amino-acid chain: DNA ligase (670 aa).

NAD(+)-binding positions include 36 to 40 (DEEYD), 84 to 85 (SL), and glutamate 116. The N6-AMP-lysine intermediate role is filled by lysine 118. Residues arginine 139, glutamate 177, lysine 293, and lysine 317 each coordinate NAD(+). Residues cysteine 411, cysteine 414, cysteine 429, and cysteine 434 each coordinate Zn(2+). One can recognise a BRCT domain in the interval 594–670 (KKPSPLKGLT…SYEEFLKMLE (77 aa)).

This sequence belongs to the NAD-dependent DNA ligase family. LigA subfamily. Mg(2+) serves as cofactor. It depends on Mn(2+) as a cofactor.

The catalysed reaction is NAD(+) + (deoxyribonucleotide)n-3'-hydroxyl + 5'-phospho-(deoxyribonucleotide)m = (deoxyribonucleotide)n+m + AMP + beta-nicotinamide D-nucleotide.. Functionally, DNA ligase that catalyzes the formation of phosphodiester linkages between 5'-phosphoryl and 3'-hydroxyl groups in double-stranded DNA using NAD as a coenzyme and as the energy source for the reaction. It is essential for DNA replication and repair of damaged DNA. The polypeptide is DNA ligase (Thermodesulfovibrio yellowstonii (strain ATCC 51303 / DSM 11347 / YP87)).